The primary structure comprises 243 residues: ABC transporter arginine-binding protein 1 (243 aa).

The signal sequence occupies residues 1-19 (MKKLVLAALLASFTFGASA).

The protein belongs to the bacterial solute-binding protein 3 family. As to quaternary structure, the complex is composed of two ATP-binding proteins (ArtP), two transmembrane proteins (ArtM and ArtQ) and two solute-binding proteins (ArtJ and ArtI).

The protein localises to the periplasm. Its function is as follows. Part of the ABC transporter complex ArtPIQMJ involved in arginine transport. Binds L-arginine with high affinity. This Escherichia coli (strain K12) protein is ABC transporter arginine-binding protein 1 (artJ).